Consider the following 631-residue polypeptide: Protein FRIABLE 1 (631 aa).

Residues 1 to 13 (MSVGVPVNPSSSS) are compositionally biased toward low complexity. The disordered stretch occupies residues 1–36 (MSVGVPVNPSSSSQLPAAPTTTTRRRVADSQEDHSH). At 1–120 (MSVGVPVNPS…NMRSTTNLGR (120 aa)) the chain is on the cytoplasmic side. The segment covering 26–36 (RVADSQEDHSH) has biased composition (basic and acidic residues). A helical; Signal-anchor for type II membrane protein membrane pass occupies residues 121-141 (FILTLLSILVVTFFLIVALSG). Over 142–631 (GVGRRRKHVE…RPSLRAQSLR (490 aa)) the chain is Lumenal. Residues Asn246, Asn329, and Asn364 are each glycosylated (N-linked (GlcNAc...) asparagine). 384–386 (HLR) contributes to the substrate binding site. N-linked (GlcNAc...) asparagine glycosylation is found at Asn398 and Asn425.

It belongs to the glycosyltransferase GT106 family. As to expression, ubiquitous. Strong expression in young seedlings, particularly at the junction between hypocotyl and root, in emerging cotyledons, and in parts of the roots. Also detected in the inflorescence (sepals, petals, mature pollen and siliques) and rosette leaves.

It localises to the golgi apparatus membrane. Its pathway is glycan metabolism. In terms of biological role, glycosyltransferase required for normal cell adhesion and cell wall integrity. This Arabidopsis thaliana (Mouse-ear cress) protein is Protein FRIABLE 1.